We begin with the raw amino-acid sequence, 78 residues long: Large ribosomal subunit protein bL28 (78 aa).

It belongs to the bacterial ribosomal protein bL28 family.

This is Large ribosomal subunit protein bL28 from Prochlorococcus marinus (strain AS9601).